The primary structure comprises 245 residues: MDAISSLGTNCVLSGVSPFSQENQSKSKLSPFMSLDLKEHPMASADFTNQTLTAFSSSSASPFQAKTSSIGMSRGMRWWEKSTNHNMLEIQSANHLVDSLLNAGDRLVVLDFYSPGCGGCKSLHPKICQLAETNPNVMFLKVNQEELRTMCHGLNVHVLPFFKFYRGAEGKVCSFSCTIATINKFKKALDKHGSERCSLGDAKGLDEKELAALASVGELKMNSLTMHQASNIGYKTEEQYQTMVL.

Residues M1 to S92 constitute a chloroplast transit peptide. Residues A93–S194 enclose the Thioredoxin domain. Residues C117 and C120 each act as nucleophile in the active site. C117 and C120 form a disulfide bridge.

This sequence belongs to the thioredoxin family.

The protein resides in the plastid. The protein localises to the chloroplast. Its function is as follows. Probable thiol-disulfide oxidoreductase that may participate in various redox reactions. This is Thioredoxin-like 1-2, chloroplastic from Arabidopsis thaliana (Mouse-ear cress).